The primary structure comprises 201 residues: Small ribosomal subunit protein uS4 (201 aa).

One can recognise an S4 RNA-binding domain in the interval 93–153 (ARLDNVVYRM…EKSKSLEAID (61 aa)).

This sequence belongs to the universal ribosomal protein uS4 family. Part of the 30S ribosomal subunit. Contacts protein S5. The interaction surface between S4 and S5 is involved in control of translational fidelity.

Functionally, one of the primary rRNA binding proteins, it binds directly to 16S rRNA where it nucleates assembly of the body of the 30S subunit. With S5 and S12 plays an important role in translational accuracy. The chain is Small ribosomal subunit protein uS4 from Flavobacterium psychrophilum (strain ATCC 49511 / DSM 21280 / CIP 103535 / JIP02/86).